The primary structure comprises 172 residues: Endoribonuclease YbeY (172 aa).

Positions 134, 138, and 144 each coordinate Zn(2+).

This sequence belongs to the endoribonuclease YbeY family. The cofactor is Zn(2+).

The protein localises to the cytoplasm. Single strand-specific metallo-endoribonuclease involved in late-stage 70S ribosome quality control and in maturation of the 3' terminus of the 16S rRNA. This is Endoribonuclease YbeY from Burkholderia cenocepacia (strain HI2424).